The sequence spans 98 residues: DNA-directed RNA polymerase subunit omega (98 aa).

This sequence belongs to the RNA polymerase subunit omega family. The RNAP catalytic core consists of 2 alpha, 1 beta, 1 beta' and 1 omega subunit. When a sigma factor is associated with the core the holoenzyme is formed, which can initiate transcription.

It catalyses the reaction RNA(n) + a ribonucleoside 5'-triphosphate = RNA(n+1) + diphosphate. Its function is as follows. Promotes RNA polymerase assembly. Latches the N- and C-terminal regions of the beta' subunit thereby facilitating its interaction with the beta and alpha subunits. In Tropheryma whipplei (strain Twist) (Whipple's bacillus), this protein is DNA-directed RNA polymerase subunit omega.